The primary structure comprises 482 residues: Bifunctional protein GlmU (482 aa).

Positions 1-238 (MSAIRPAAVV…HREIAGINNR (238 aa)) are pyrophosphorylase. UDP-N-acetyl-alpha-D-glucosamine-binding positions include 12 to 15 (LAAG), Lys26, Gln79, and 84 to 85 (GT). Position 110 (Asp110) interacts with Mg(2+). UDP-N-acetyl-alpha-D-glucosamine contacts are provided by Gly147, Glu163, Asn178, and Asn236. Asn236 contacts Mg(2+). Positions 239–259 (VQLAEARRILNDRLLTGAMLA) are linker. An N-acetyltransferase region spans residues 260 to 482 (GVTVVDPATT…AVSREADGED (223 aa)). 2 residues coordinate UDP-N-acetyl-alpha-D-glucosamine: Arg341 and Lys359. The Proton acceptor role is filled by His371. The UDP-N-acetyl-alpha-D-glucosamine site is built by Tyr374 and Asn385. Acetyl-CoA contacts are provided by residues Ala388, 394-395 (NY), Ser413, Ala431, and Arg448. The interval 460 to 482 (RKRPGSAAAKAAEAVSREADGED) is disordered. The span at 464-473 (GSAAAKAAEA) shows a compositional bias: low complexity.

This sequence in the N-terminal section; belongs to the N-acetylglucosamine-1-phosphate uridyltransferase family. The protein in the C-terminal section; belongs to the transferase hexapeptide repeat family. As to quaternary structure, homotrimer. The cofactor is Mg(2+).

Its subcellular location is the cytoplasm. The enzyme catalyses alpha-D-glucosamine 1-phosphate + acetyl-CoA = N-acetyl-alpha-D-glucosamine 1-phosphate + CoA + H(+). The catalysed reaction is N-acetyl-alpha-D-glucosamine 1-phosphate + UTP + H(+) = UDP-N-acetyl-alpha-D-glucosamine + diphosphate. Its pathway is nucleotide-sugar biosynthesis; UDP-N-acetyl-alpha-D-glucosamine biosynthesis; N-acetyl-alpha-D-glucosamine 1-phosphate from alpha-D-glucosamine 6-phosphate (route II): step 2/2. It functions in the pathway nucleotide-sugar biosynthesis; UDP-N-acetyl-alpha-D-glucosamine biosynthesis; UDP-N-acetyl-alpha-D-glucosamine from N-acetyl-alpha-D-glucosamine 1-phosphate: step 1/1. The protein operates within bacterial outer membrane biogenesis; LPS lipid A biosynthesis. In terms of biological role, catalyzes the last two sequential reactions in the de novo biosynthetic pathway for UDP-N-acetylglucosamine (UDP-GlcNAc). The C-terminal domain catalyzes the transfer of acetyl group from acetyl coenzyme A to glucosamine-1-phosphate (GlcN-1-P) to produce N-acetylglucosamine-1-phosphate (GlcNAc-1-P), which is converted into UDP-GlcNAc by the transfer of uridine 5-monophosphate (from uridine 5-triphosphate), a reaction catalyzed by the N-terminal domain. The chain is Bifunctional protein GlmU from Streptomyces coelicolor (strain ATCC BAA-471 / A3(2) / M145).